Consider the following 386-residue polypeptide: 26S proteasome non-ATPase regulatory subunit 13 homolog B (386 aa).

N-acetylalanine is present on Ala-2. A PCI domain is found at 174-347 (FSEFYKNALL…GTVYVSWAQP (174 aa)).

Belongs to the proteasome subunit S11 family. As to quaternary structure, component of the 19S regulatory particle (RP/PA700) lid subcomplex of the 26S proteasome. The 26S proteasome is composed of a core protease (CP), known as the 20S proteasome, capped at one or both ends by the 19S regulatory particle (RP/PA700). The RP/PA700 complex is composed of at least 17 different subunits in two subcomplexes, the base and the lid, which form the portions proximal and distal to the 20S proteolytic core, respectively. Ubiquitous with highest expression in flowers.

In terms of biological role, acts as a regulatory subunit of the 26S proteasome which is involved in the ATP-dependent degradation of ubiquitinated proteins. This is 26S proteasome non-ATPase regulatory subunit 13 homolog B (RPN9B) from Arabidopsis thaliana (Mouse-ear cress).